The following is a 267-amino-acid chain: 5'-nucleotidase SurE (267 aa).

A divalent metal cation contacts are provided by Asp14, Asp15, Ser45, and Asn100.

Belongs to the SurE nucleotidase family. Requires a divalent metal cation as cofactor.

It is found in the cytoplasm. It carries out the reaction a ribonucleoside 5'-phosphate + H2O = a ribonucleoside + phosphate. Nucleotidase that shows phosphatase activity on nucleoside 5'-monophosphates. The sequence is that of 5'-nucleotidase SurE from Methanosarcina acetivorans (strain ATCC 35395 / DSM 2834 / JCM 12185 / C2A).